A 1067-amino-acid chain; its full sequence is Kinesin-like protein KIF11-B (1067 aa).

Residues 18–359 (NIQVVVRCRP…LDYANRAKSI (342 aa)) form the Kinesin motor domain. Residue 105 to 112 (GQTGTGKT) participates in ATP binding. A coiled-coil region spans residues 365-480 (VNQKLTKKAL…SKEQLAQESF (116 aa)). Thr937 bears the Phosphothreonine; by CDK1 mark. The residue at position 1046 (Ser1046) is a Phosphoserine; by NEK6.

This sequence belongs to the TRAFAC class myosin-kinesin ATPase superfamily. Kinesin family. BimC subfamily. In terms of assembly, heterotetramer of two heavy and two light chains. Interacts with aurka. Post-translationally, phosphorylation of Thr-937 during mitosis controls the association of this protein with the spindle apparatus. In terms of processing, a subset of this protein primarily localized at the spindle pole is phosphorylated by NEK6 during mitosis. Phosphorylated on a serine residue by aurka. In unfertilized eggs, shows highest expression in the germinal vesicle and radial yolk-poor channels. Also present in testis.

It is found in the cytoplasm. Its subcellular location is the cytoskeleton. It localises to the spindle pole. Functionally, plus end-directed motor protein required for establishing a bipolar spindle. Associates with both interphase and spindle microtubules. May be involved in nuclear divisions taking place during the development of unfertilized eggs. Required in non-mitotic cells for transport of secretory proteins from the Golgi complex to the cell surface. The chain is Kinesin-like protein KIF11-B (kif11-b) from Xenopus laevis (African clawed frog).